Consider the following 160-residue polypeptide: S-protein homolog 13 (160 aa).

Residues 1-27 (MGRDLGWCFFVATVLLAAVLLPAPTIA) form the signal peptide.

The protein belongs to the plant self-incompatibility (S1) protein family.

It is found in the secreted. The protein is S-protein homolog 13 of Arabidopsis thaliana (Mouse-ear cress).